A 334-amino-acid polypeptide reads, in one-letter code: Glyceraldehyde-3-phosphate dehydrogenase (334 aa).

NAD(+) is bound by residues 12-13 and G111; that span reads TI. 140-142 is a binding site for D-glyceraldehyde 3-phosphate; that stretch reads SCN. Catalysis depends on C141, which acts as the Nucleophile. R167 is a binding site for NAD(+). Position 192–193 (192–193) interacts with D-glyceraldehyde 3-phosphate; sequence HG. Q298 provides a ligand contact to NAD(+).

Belongs to the glyceraldehyde-3-phosphate dehydrogenase family. In terms of assembly, homotetramer.

The protein localises to the cytoplasm. The enzyme catalyses D-glyceraldehyde 3-phosphate + phosphate + NADP(+) = (2R)-3-phospho-glyceroyl phosphate + NADPH + H(+). It carries out the reaction D-glyceraldehyde 3-phosphate + phosphate + NAD(+) = (2R)-3-phospho-glyceroyl phosphate + NADH + H(+). It participates in carbohydrate degradation; glycolysis; pyruvate from D-glyceraldehyde 3-phosphate: step 1/5. This is Glyceraldehyde-3-phosphate dehydrogenase (gap) from Pyrococcus abyssi (strain GE5 / Orsay).